Reading from the N-terminus, the 1375-residue chain is DNA-directed RNA polymerase subunit beta (1375 aa).

Belongs to the RNA polymerase beta chain family. In terms of assembly, the RNAP catalytic core consists of 2 alpha, 1 beta, 1 beta' and 1 omega subunit. When a sigma factor is associated with the core the holoenzyme is formed, which can initiate transcription.

It catalyses the reaction RNA(n) + a ribonucleoside 5'-triphosphate = RNA(n+1) + diphosphate. Its function is as follows. DNA-dependent RNA polymerase catalyzes the transcription of DNA into RNA using the four ribonucleoside triphosphates as substrates. The sequence is that of DNA-directed RNA polymerase subunit beta from Campylobacter jejuni subsp. jejuni serotype O:6 (strain 81116 / NCTC 11828).